Here is a 105-residue protein sequence, read N- to C-terminus: Probable tetrachloroethene reductive dehalogenase membrane anchor protein (105 aa).

The next 3 membrane-spanning stretches (helical) occupy residues 3–23 (IYDV…QYGI), 35–55 (IPLQ…LAWG), and 66–86 (AIGM…IITY).

The protein belongs to the PceB family.

It is found in the cell membrane. In terms of biological role, may act as a membrane anchor for the tetrachloroethene reductive dehalogenase PceA. This is Probable tetrachloroethene reductive dehalogenase membrane anchor protein from Dehalobacter restrictus (strain DSM 9455 / PER-K23).